The sequence spans 230 residues: Putative transcription factor bHLH107 (230 aa).

The bHLH domain occupies Ala-44 to Leu-93.

Homodimer.

It localises to the nucleus. In Arabidopsis thaliana (Mouse-ear cress), this protein is Putative transcription factor bHLH107 (BHLH107).